The primary structure comprises 45 residues: Globin, minor monomeric component (45 aa).

Residues 1–45 (GLSAAERQVVASCWKDIAGADXGAGVGKEXLIKFISAAPEMAAVF) form the Globin domain.

Belongs to the globin family. As to quaternary structure, monomer.

This chain is Globin, minor monomeric component, found in Glycera dibranchiata (Bloodworm).